The primary structure comprises 242 residues: Uridylate kinase (242 aa).

13 to 16 (KLSG) contributes to the ATP binding site. A UMP-binding site is contributed by Gly55. Positions 56 and 60 each coordinate ATP. UMP is bound by residues Asp75 and 136 to 143 (TGNPFFTT). Thr163, Tyr169, and Asp172 together coordinate ATP.

Belongs to the UMP kinase family. As to quaternary structure, homohexamer.

Its subcellular location is the cytoplasm. It catalyses the reaction UMP + ATP = UDP + ADP. It participates in pyrimidine metabolism; CTP biosynthesis via de novo pathway; UDP from UMP (UMPK route): step 1/1. Inhibited by UTP. In terms of biological role, catalyzes the reversible phosphorylation of UMP to UDP. This chain is Uridylate kinase, found in Zymomonas mobilis subsp. mobilis (strain ATCC 31821 / ZM4 / CP4).